The sequence spans 55 residues: ATP synthase F(0) complex subunit 8 (55 aa).

The chain crosses the membrane as a helical span at residues 4 to 24 (LNPSPWLLILLFSWLIFLTML). The disordered stretch occupies residues 36–55 (MPSTQNMCKQEPEPWTWPWA).

Belongs to the ATPase protein 8 family. In terms of assembly, component of the ATP synthase complex composed at least of ATP5F1A/subunit alpha, ATP5F1B/subunit beta, ATP5MC1/subunit c (homooctomer), MT-ATP6/subunit a, MT-ATP8/subunit 8, ATP5ME/subunit e, ATP5MF/subunit f, ATP5MG/subunit g, ATP5MK/subunit k, ATP5MJ/subunit j, ATP5F1C/subunit gamma, ATP5F1D/subunit delta, ATP5F1E/subunit epsilon, ATP5PF/subunit F6, ATP5PB/subunit b, ATP5PD/subunit d, ATP5PO/subunit OSCP. ATP synthase complex consists of a soluble F(1) head domain (subunits alpha(3) and beta(3)) - the catalytic core - and a membrane F(0) domain - the membrane proton channel (subunits c, a, 8, e, f, g, k and j). These two domains are linked by a central stalk (subunits gamma, delta, and epsilon) rotating inside the F1 region and a stationary peripheral stalk (subunits F6, b, d, and OSCP).

The protein localises to the mitochondrion membrane. Functionally, subunit 8, of the mitochondrial membrane ATP synthase complex (F(1)F(0) ATP synthase or Complex V) that produces ATP from ADP in the presence of a proton gradient across the membrane which is generated by electron transport complexes of the respiratory chain. ATP synthase complex consist of a soluble F(1) head domain - the catalytic core - and a membrane F(1) domain - the membrane proton channel. These two domains are linked by a central stalk rotating inside the F(1) region and a stationary peripheral stalk. During catalysis, ATP synthesis in the catalytic domain of F(1) is coupled via a rotary mechanism of the central stalk subunits to proton translocation. In vivo, can only synthesize ATP although its ATP hydrolase activity can be activated artificially in vitro. Part of the complex F(0) domain. The polypeptide is ATP synthase F(0) complex subunit 8 (Latimeria chalumnae (Coelacanth)).